Here is a 256-residue protein sequence, read N- to C-terminus: 2,3,4,5-tetrahydropyridine-2,6-dicarboxylate N-acetyltransferase (256 aa).

This sequence belongs to the transferase hexapeptide repeat family. DapH subfamily.

The catalysed reaction is (S)-2,3,4,5-tetrahydrodipicolinate + acetyl-CoA + H2O = L-2-acetamido-6-oxoheptanedioate + CoA. Its pathway is amino-acid biosynthesis; L-lysine biosynthesis via DAP pathway; LL-2,6-diaminopimelate from (S)-tetrahydrodipicolinate (acetylase route): step 1/3. In terms of biological role, catalyzes the transfer of an acetyl group from acetyl-CoA to tetrahydrodipicolinate. The protein is 2,3,4,5-tetrahydropyridine-2,6-dicarboxylate N-acetyltransferase of Lactococcus lactis subsp. lactis (strain IL1403) (Streptococcus lactis).